We begin with the raw amino-acid sequence, 682 residues long: Methionine--tRNA ligase (682 aa).

A 'HIGH' region motif is present at residues 12–22; sequence PYANGAIHLGH. Zn(2+)-binding residues include Cys-143, Cys-146, Cys-156, and Cys-159. A 'KMSKS' region motif is present at residues 328-332; that stretch reads KMSKS. Lys-331 serves as a coordination point for ATP. The tRNA-binding domain occupies 580-682; that stretch reads DFAKLDLRVA…EGIRPGMQVK (103 aa).

This sequence belongs to the class-I aminoacyl-tRNA synthetase family. MetG type 1 subfamily. In terms of assembly, homodimer. Requires Zn(2+) as cofactor.

The protein resides in the cytoplasm. The catalysed reaction is tRNA(Met) + L-methionine + ATP = L-methionyl-tRNA(Met) + AMP + diphosphate. Its function is as follows. Is required not only for elongation of protein synthesis but also for the initiation of all mRNA translation through initiator tRNA(fMet) aminoacylation. This chain is Methionine--tRNA ligase, found in Actinobacillus pleuropneumoniae serotype 7 (strain AP76).